The sequence spans 420 residues: O-methyltransferase opaF (420 aa).

S-adenosyl-L-methionine-binding positions include 262–263 (GG), Asp287, and 308–309 (DL). The active-site Proton acceptor is the His328.

Belongs to the class I-like SAM-binding methyltransferase superfamily. Cation-independent O-methyltransferase family.

The protein operates within secondary metabolite biosynthesis. Its function is as follows. O-methyltransferase; part of the gene cluster that mediates the biosynthesis of oxepinamides, derivatives of anthranilyl-containing tripeptides that share an oxepin ring and a fused pyrimidinone moiety. The nonribosomal peptide synthetase (NRPS) opaA assembles the quinazolinone core with D-Phe incorporation. The first adenylation domain (A1) of opaA loads and activates anthranilic acid whereas the second A domain (A2) is for activating of L-Phe, which is then converted to D-form by the E domain. The third A domain (A3) is responsible for L-Ile activation and the terminal condensation domain C3 for cyclization and releasing the NRPS product protuboxepin K. The cytochrome P450 monooxygenase opaB then catalyzes alone the oxepin ring formation to convert protuboxepin K into protuboxepin A. The flavoenzyme opaC installs subsequently one hydroxyl group at the oxepin ring, accompanied by double bond migration, to form 15-epi-oxepinamide E. The epimerase opaE changes the D-Phe residue back to L-form, leading to oxepinamide E, which is further methylated at the hydroxyl group at C-12 by the O-methyltransferase OpaF to yield oxepinamide F. The chain is O-methyltransferase opaF from Aspergillus ustus.